A 138-amino-acid polypeptide reads, in one-letter code: ATP synthase epsilon chain (138 aa).

This sequence belongs to the ATPase epsilon chain family. As to quaternary structure, F-type ATPases have 2 components, CF(1) - the catalytic core - and CF(0) - the membrane proton channel. CF(1) has five subunits: alpha(3), beta(3), gamma(1), delta(1), epsilon(1). CF(0) has three main subunits: a, b and c.

It is found in the cell inner membrane. Its function is as follows. Produces ATP from ADP in the presence of a proton gradient across the membrane. The chain is ATP synthase epsilon chain from Bartonella quintana (strain Toulouse) (Rochalimaea quintana).